The primary structure comprises 196 residues: Vacuolar iron transporter homolog 2 (196 aa).

Residues 1–31 (MDQSGSNTNMDIEKESTTFDYSKRSQWLRAA) lie on the Cytoplasmic side of the membrane. Residues 32–52 (VLGANDGLVSTASLMMGVGAV) form a helical membrane-spanning segment. The Vacuolar portion of the chain corresponds to 53–59 (KHDVKAM). The helical transmembrane segment at 60-80 (ILSGFAGMVAGACSMAIGEFV) threads the bilayer. The Cytoplasmic portion of the chain corresponds to 81–112 (SVYSQYDIEVAQMERDSVEIEKEKLPSPMQAA). The helical transmembrane segment at 113–133 (AASALAFSAGAIVPLLAAAFV) threads the bilayer. Residues 134-139 (KEYKMR) are Vacuolar-facing. A helical membrane pass occupies residues 140 to 160 (IISVVVAVTVALMVFGWLGAA). Residues 161 to 172 (LGKAPAVRSSAR) lie on the Cytoplasmic side of the membrane. Residues 173–193 (VLFGGWLAMAVTFGLTKLIGL) form a helical membrane-spanning segment. The Vacuolar segment spans residues 194-196 (YGL).

It belongs to the CCC1 family. In terms of tissue distribution, expressed in roots, leaves and inflorescences.

The protein resides in the vacuole membrane. It catalyses the reaction Fe(2+)(in) = Fe(2+)(out). Its function is as follows. Vacuolar iron transporter involved in the transfer of iron ions from the cytosol to the vacuole for intracellular iron storage. Involved in regulation of cellular iron homeostasis. Vacuolar iron storage is required for seed embryo and seedling development. This Arabidopsis thaliana (Mouse-ear cress) protein is Vacuolar iron transporter homolog 2.